Reading from the N-terminus, the 160-residue chain is DNA polymerase delta subunit 4 (160 aa).

The interval 1–48 is disordered; it reads MKKRTTQAKKSGQNTNIRDVFPHVVRSNSSQSHIGKKVSSEQSPTPDV. Residues 8–17 show a composition bias toward polar residues; sequence AKKSGQNTNI.

It belongs to the DNA polymerase delta subunit 4 family. Heterotetramer that consist of the pol3, cdc1, cdc27 and cdm1 subunits. Interacts with cdc1 and pol3.

Its subcellular location is the nucleus. Its function is as follows. Appears to have a role in the stabilization of the DNA polymerase delta complex. The chain is DNA polymerase delta subunit 4 (cdm1) from Schizosaccharomyces pombe (strain 972 / ATCC 24843) (Fission yeast).